The sequence spans 458 residues: Transcription factor verZ (458 aa).

Positions 117-144 (CDRCQAAKVKCGHEKPSCRRCTYHKVEC) form a DNA-binding region, zn(2)-C6 fungal-type. 2 disordered regions span residues 153-256 (GRPR…MQSM) and 435-458 (MEEE…EDGK). Polar residues-rich tracts occupy residues 167-186 (PSPQ…SKSA), 193-207 (FTGT…QSPV), and 223-235 (RAEP…TTNF).

Its subcellular location is the nucleus. Functionally, transcription factor; part of the gene cluster that mediates the biosynthesis of 11'-deoxyverticillin A, one of the dimeric epipolythiodioxopiperazines (ETPs) from the verticillin family that act as mycotoxins. 11'-deoxyverticillin A is required for normal conidiation. Directly binds the consensus motif 5'-(T/C)(C/A)(G/T)GN3CC(G/T)(A/G)(G/C)-3' localized in the upstream regions of the verticillin biosynthetic genes. The sequence is that of Transcription factor verZ from Clonostachys rogersoniana.